The following is a 484-amino-acid chain: Glycogen synthase (484 aa).

Lys-15 lines the ADP-alpha-D-glucose pocket.

The protein belongs to the glycosyltransferase 1 family. Bacterial/plant glycogen synthase subfamily.

It catalyses the reaction [(1-&gt;4)-alpha-D-glucosyl](n) + ADP-alpha-D-glucose = [(1-&gt;4)-alpha-D-glucosyl](n+1) + ADP + H(+). It functions in the pathway glycan biosynthesis; glycogen biosynthesis. Functionally, synthesizes alpha-1,4-glucan chains using ADP-glucose. The protein is Glycogen synthase of Anoxybacillus flavithermus (strain DSM 21510 / WK1).